The chain runs to 632 residues: Probable potassium transport system protein Kup (632 aa).

Helical transmembrane passes span 19–39 (LLCL…PLYV), 57–77 (VIGI…LKYV), 111–131 (ILFL…VITP), 147–167 (PLLQ…LFML), 175–195 (IGAL…LVGL), 213–233 (AFAF…AVVL), 257–277 (WYGG…ALLL), 286–306 (PFFL…ATAA), 347–367 (IYIP…VLGF), 376–396 (AYGV…FFVL), 404–424 (FLLG…FFSA), and 429–449 (VAQG…IMIT).

Belongs to the HAK/KUP transporter (TC 2.A.72) family.

The protein resides in the cell inner membrane. It carries out the reaction K(+)(in) + H(+)(in) = K(+)(out) + H(+)(out). Functionally, transport of potassium into the cell. Likely operates as a K(+):H(+) symporter. The chain is Probable potassium transport system protein Kup from Nitrosospira multiformis (strain ATCC 25196 / NCIMB 11849 / C 71).